A 270-amino-acid polypeptide reads, in one-letter code: DNA adenine methylase (270 aa).

Residues Trp-10, Lys-14, Asp-54, and Asp-181 each contribute to the S-adenosyl-L-methionine site.

This sequence belongs to the N(4)/N(6)-methyltransferase family.

It carries out the reaction a 2'-deoxyadenosine in DNA + S-adenosyl-L-methionine = an N(6)-methyl-2'-deoxyadenosine in DNA + S-adenosyl-L-homocysteine + H(+). An alpha subtype methylase, recognizes the double-stranded sequence 5'-GATC-3' and methylates A-2. Overexpression leads to hypermutability. May be involved in methyl-directed DNA mismatch repair, initiation of chromosome replication and gene expression. In Serratia marcescens, this protein is DNA adenine methylase.